Consider the following 153-residue polypeptide: uncharacterized protein (153 aa).

The first 25 residues, 1–25 (MKKRQYLKSLYVALLGTLCYLSVNA), serve as a signal peptide directing secretion.

This is an uncharacterized protein from Pasteurella multocida (strain Pm70).